A 387-amino-acid chain; its full sequence is DNA double-strand break repair protein Mre11 (387 aa).

Mn(2+) contacts are provided by aspartate 9, histidine 11, aspartate 50, and asparagine 85. The active-site Proton donor is the histidine 86. Residues histidine 150, aspartate 181, and histidine 183 each contribute to the Mn(2+) site. Residues 365–387 are disordered; that stretch reads AVLDDDADAADDDGRPTTVEEFQ. The span at 366 to 375 shows a compositional bias: acidic residues; sequence VLDDDADAAD.

This sequence belongs to the MRE11/RAD32 family. As to quaternary structure, homodimer. Forms a heterotetramer composed of two Mre11 subunits and two Rad50 subunits. It depends on Mn(2+) as a cofactor.

Nuclease activity is regulated by Rad50. Functionally, part of the Rad50/Mre11 complex, which is involved in the early steps of DNA double-strand break (DSB) repair. Mre11 binds to DSB ends and has both double-stranded 3'-5' exonuclease activity and single-stranded endonuclease activity. In Halobacterium salinarum (strain ATCC 700922 / JCM 11081 / NRC-1) (Halobacterium halobium), this protein is DNA double-strand break repair protein Mre11.